The following is a 232-amino-acid chain: dTTP/UTP pyrophosphatase (232 aa).

Residue aspartate 103 is the Proton acceptor of the active site.

Belongs to the Maf family. YhdE subfamily. A divalent metal cation is required as a cofactor.

It localises to the cytoplasm. The enzyme catalyses dTTP + H2O = dTMP + diphosphate + H(+). The catalysed reaction is UTP + H2O = UMP + diphosphate + H(+). It carries out the reaction 5-methyl-UTP + H2O = 5-methyl-UMP + diphosphate + H(+). It catalyses the reaction psi-UTP + H2O = psi-UMP + diphosphate + H(+). Functionally, nucleoside triphosphate pyrophosphatase that hydrolyzes dTTP and UTP. Can also hydrolyze the modified nucleotides 5-methyl-UTP (m(5)UTP) and pseudo-UTP. Has weak activity with CTP. May have a dual role in cell division arrest and in preventing the incorporation of modified nucleotides into cellular nucleic acids. The sequence is that of dTTP/UTP pyrophosphatase from Saccharomyces cerevisiae (strain ATCC 204508 / S288c) (Baker's yeast).